Consider the following 384-residue polypeptide: UDP-galactopyranose mutase (384 aa).

Residues 1–23 (MKSKKILIVGAGFSGAVIGRQLA) form the signal peptide. Residues S14, 33–34 (DQ), N41, and 60–61 (HI) each bind FAD. The UDP-alpha-D-galactose site is built by N84, F151, T156, W160, and Y185. F219 is an FAD binding site. Residues N270, R280, and Y314 each coordinate UDP-alpha-D-galactose. R343 lines the FAD pocket. Y349 lines the UDP-alpha-D-galactose pocket. Residue 350 to 355 (LDMDVT) participates in FAD binding.

It belongs to the UDP-galactopyranose/dTDP-fucopyranose mutase family. Homodimer. FAD is required as a cofactor.

The enzyme catalyses UDP-alpha-D-galactose = UDP-alpha-D-galactofuranose. The protein operates within bacterial outer membrane biogenesis; LPS O-antigen biosynthesis. In terms of biological role, involved in the biosynthesis of the galactose-containing O-side-chain polysaccharide backbone structure of D-galactan I which is a key component of lipopolysaccharide (LPS). Catalyzes the interconversion through a 2-keto intermediate of uridine diphosphogalactopyranose (UDP-GalP) into uridine diphosphogalactofuranose (UDP-GalF) which is the biosynthetic precursor of galactofuranosyl residues. The chain is UDP-galactopyranose mutase (rfbD) from Klebsiella pneumoniae.